The sequence spans 155 residues: Desiccation-related protein clone PCC6-19 (155 aa).

Positions 1–155 are disordered; sequence MAQFGGEKYG…IKEKLPGGQH (155 aa). Composition is skewed to gly residues over residues 27–39 and 47–76; these read AHRG…GGQQ and GVLG…GALG. Low complexity predominate over residues 83–92; sequence GSSSSSSSSE. A compositionally biased stretch (polar residues) spans 118–135; that stretch reads TTTDQQQYGTAATHGQAQ. The span at 136-155 shows a compositional bias: basic and acidic residues; that stretch reads QHEKKGIMDKIKEKLPGGQH.

The protein belongs to the plant dehydrin family.

The sequence is that of Desiccation-related protein clone PCC6-19 from Craterostigma plantagineum (Blue gem).